Reading from the N-terminus, the 632-residue chain is Armadillo repeat-containing X-linked protein 2 (632 aa).

Residues 1–6 (MSRVRD) are Mitochondrial intermembrane-facing. The interval 1 to 6 (MSRVRD) is mitochondrion outer membrane (MOM)-targeting sequence. Residues 7–25 (AGCVAAGIVIGAGAWYCVY) form a helical; Signal-anchor membrane-spanning segment. Positions 26 to 40 (KYTRGRDQTKKRMAK) are mitochondrion outer membrane (MOM)-targeting sequence. Residues 26–632 (KYTRGRDQTK…VKVIKLVNKF (607 aa)) are Cytoplasmic-facing. Disordered regions lie at residues 68-124 (GFSP…AGVG), 160-304 (APKV…KVEV), and 335-369 (VPDS…RPVA). Low complexity-rich tracts occupy residues 86-120 (EASA…EADG) and 211-241 (VASP…SPGT). Acidic residues predominate over residues 336–356 (PDSEEGESGWTDTESDSDSEP). ARM repeat units lie at residues 376 to 416 (PYEI…NNAN), 418 to 457 (SCNQ…NLSE), and 498 to 537 (ITND…NFAE).

It belongs to the eutherian X-chromosome-specific Armcx family. In terms of tissue distribution, expressed at high levels ovary, heart, testis, prostate, brain, spleen and colon. Expressed at very low levels in liver and thymus. Not expressed in peripheral blood leukocytes. Not expressed in pancreas and ovarian carcinomas.

The protein localises to the mitochondrion. The protein resides in the mitochondrion outer membrane. May regulate the dynamics and distribution of mitochondria in neural cells. This Homo sapiens (Human) protein is Armadillo repeat-containing X-linked protein 2 (ARMCX2).